Here is a 121-residue protein sequence, read N- to C-terminus: Large ribosomal subunit protein bL12 (121 aa).

The protein belongs to the bacterial ribosomal protein bL12 family. As to quaternary structure, homodimer. Part of the ribosomal stalk of the 50S ribosomal subunit. Forms a multimeric L10(L12)X complex, where L10 forms an elongated spine to which 2 to 4 L12 dimers bind in a sequential fashion. Binds GTP-bound translation factors.

Its function is as follows. Forms part of the ribosomal stalk which helps the ribosome interact with GTP-bound translation factors. Is thus essential for accurate translation. The chain is Large ribosomal subunit protein bL12 from Proteus mirabilis (strain HI4320).